A 230-amino-acid polypeptide reads, in one-letter code: Flagellar L-ring protein (230 aa).

An N-terminal signal peptide occupies residues M1–G26. Residue C27 is the site of N-palmitoyl cysteine attachment. The S-diacylglycerol cysteine moiety is linked to residue C27.

It belongs to the FlgH family. The basal body constitutes a major portion of the flagellar organelle and consists of four rings (L,P,S, and M) mounted on a central rod.

The protein localises to the cell outer membrane. The protein resides in the bacterial flagellum basal body. In terms of biological role, assembles around the rod to form the L-ring and probably protects the motor/basal body from shearing forces during rotation. The sequence is that of Flagellar L-ring protein from Burkholderia lata (strain ATCC 17760 / DSM 23089 / LMG 22485 / NCIMB 9086 / R18194 / 383).